Reading from the N-terminus, the 403-residue chain is S-adenosylmethionine synthase (403 aa).

An ATP-binding site is contributed by histidine 17. Aspartate 19 provides a ligand contact to Mg(2+). K(+) is bound at residue glutamate 45. Glutamate 58 and glutamine 101 together coordinate L-methionine. The flexible loop stretch occupies residues 101 to 111 (QSPDIAMGVDR). ATP-binding positions include 177 to 179 (DGK), 244 to 245 (RF), aspartate 253, 259 to 260 (RK), alanine 276, and lysine 280. Residue aspartate 253 coordinates L-methionine. Lysine 284 contacts L-methionine.

The protein belongs to the AdoMet synthase family. As to quaternary structure, homotetramer; dimer of dimers. Mg(2+) serves as cofactor. Requires K(+) as cofactor.

The protein localises to the cytoplasm. It carries out the reaction L-methionine + ATP + H2O = S-adenosyl-L-methionine + phosphate + diphosphate. It functions in the pathway amino-acid biosynthesis; S-adenosyl-L-methionine biosynthesis; S-adenosyl-L-methionine from L-methionine: step 1/1. Functionally, catalyzes the formation of S-adenosylmethionine (AdoMet) from methionine and ATP. The overall synthetic reaction is composed of two sequential steps, AdoMet formation and the subsequent tripolyphosphate hydrolysis which occurs prior to release of AdoMet from the enzyme. The sequence is that of S-adenosylmethionine synthase from Geobacillus kaustophilus (strain HTA426).